The chain runs to 503 residues: Aspartyl/glutamyl-tRNA(Asn/Gln) amidotransferase subunit B (503 aa).

This sequence belongs to the GatB/GatE family. GatB subfamily. In terms of assembly, heterotrimer of A, B and C subunits.

The catalysed reaction is L-glutamyl-tRNA(Gln) + L-glutamine + ATP + H2O = L-glutaminyl-tRNA(Gln) + L-glutamate + ADP + phosphate + H(+). It catalyses the reaction L-aspartyl-tRNA(Asn) + L-glutamine + ATP + H2O = L-asparaginyl-tRNA(Asn) + L-glutamate + ADP + phosphate + 2 H(+). In terms of biological role, allows the formation of correctly charged Asn-tRNA(Asn) or Gln-tRNA(Gln) through the transamidation of misacylated Asp-tRNA(Asn) or Glu-tRNA(Gln) in organisms which lack either or both of asparaginyl-tRNA or glutaminyl-tRNA synthetases. The reaction takes place in the presence of glutamine and ATP through an activated phospho-Asp-tRNA(Asn) or phospho-Glu-tRNA(Gln). The polypeptide is Aspartyl/glutamyl-tRNA(Asn/Gln) amidotransferase subunit B (Ruegeria pomeroyi (strain ATCC 700808 / DSM 15171 / DSS-3) (Silicibacter pomeroyi)).